A 107-amino-acid polypeptide reads, in one-letter code: Large ribosomal subunit protein uL24 (107 aa).

This sequence belongs to the universal ribosomal protein uL24 family. In terms of assembly, part of the 50S ribosomal subunit.

One of two assembly initiator proteins, it binds directly to the 5'-end of the 23S rRNA, where it nucleates assembly of the 50S subunit. Its function is as follows. One of the proteins that surrounds the polypeptide exit tunnel on the outside of the subunit. The protein is Large ribosomal subunit protein uL24 of Thiobacillus denitrificans (strain ATCC 25259 / T1).